Here is a 388-residue protein sequence, read N- to C-terminus: Serine/threonine-protein phosphatase sitA (388 aa).

Mn(2+) is bound by residues Asp67 and His69. Residues 86-146 form a disordered region; it reads PDGSEAEAPK…SQRDRSSSSG (61 aa). Asp161 and Asn193 together coordinate Mn(2+). Catalysis depends on His194, which acts as the Proton donor. His243 and His317 together coordinate Mn(2+).

It belongs to the PPP phosphatase family. PP-6 (PP-V) subfamily. Requires Mn(2+) as cofactor.

It carries out the reaction O-phospho-L-threonyl-[protein] + H2O = L-threonyl-[protein] + phosphate. Its function is as follows. Protein phosphatase that acts as a modulator of pkcA/mpkA activity involved in the cell wall integrity pathway. Plays an important role in regulation of adhesion, cell wall integrity, biofilm formation, and virulence. This chain is Serine/threonine-protein phosphatase sitA, found in Aspergillus fumigatus (strain ATCC MYA-4609 / CBS 101355 / FGSC A1100 / Af293) (Neosartorya fumigata).